Here is a 96-residue protein sequence, read N- to C-terminus: UPF0235 protein YggU (96 aa).

This sequence belongs to the UPF0235 family.

The polypeptide is UPF0235 protein YggU (Salmonella typhimurium (strain LT2 / SGSC1412 / ATCC 700720)).